The primary structure comprises 271 residues: Shikimate dehydrogenase (NADP(+)) (271 aa).

Shikimate contacts are provided by residues 19–21 (SLS) and threonine 65. The active-site Proton acceptor is the lysine 69. Glutamate 81 is an NADP(+) binding site. Asparagine 90 and aspartate 105 together coordinate shikimate. NADP(+)-binding positions include 128-132 (GAGGA), 150-155 (NRTIEK), and isoleucine 211. Tyrosine 213 serves as a coordination point for shikimate. Position 234 (glycine 234) interacts with NADP(+).

Belongs to the shikimate dehydrogenase family. As to quaternary structure, homodimer.

The enzyme catalyses shikimate + NADP(+) = 3-dehydroshikimate + NADPH + H(+). It participates in metabolic intermediate biosynthesis; chorismate biosynthesis; chorismate from D-erythrose 4-phosphate and phosphoenolpyruvate: step 4/7. Its function is as follows. Involved in the biosynthesis of the chorismate, which leads to the biosynthesis of aromatic amino acids. Catalyzes the reversible NADPH linked reduction of 3-dehydroshikimate (DHSA) to yield shikimate (SA). This chain is Shikimate dehydrogenase (NADP(+)), found in Pyrococcus furiosus (strain ATCC 43587 / DSM 3638 / JCM 8422 / Vc1).